The following is a 367-amino-acid chain: Molybdopterin synthase catalytic subunit (367 aa).

Substrate contacts are provided by residues 101–102 (HR), K117, and 124–126 (KKE).

The protein belongs to the MoaE family. MOCS2B subfamily. In terms of assembly, heterotetramer; composed of 2 small (Mocs2A) and 2 large (Mocs2B) subunits.

The protein resides in the cytoplasm. It carries out the reaction 2 [molybdopterin-synthase sulfur-carrier protein]-C-terminal-Gly-aminoethanethioate + cyclic pyranopterin phosphate + H2O = molybdopterin + 2 [molybdopterin-synthase sulfur-carrier protein]-C-terminal Gly-Gly + 2 H(+). Its pathway is cofactor biosynthesis; molybdopterin biosynthesis. Its function is as follows. Catalytic subunit of the molybdopterin synthase complex, a complex that catalyzes the conversion of precursor Z into molybdopterin. Acts by mediating the incorporation of 2 sulfur atoms from thiocarboxylated Mocs2A into precursor Z to generate a dithiolene group. This is Molybdopterin synthase catalytic subunit from Drosophila erecta (Fruit fly).